We begin with the raw amino-acid sequence, 151 residues long: Ribonuclease H (151 aa).

Residues 1-146 form the RNase H type-1 domain; that stretch reads MSDLFAYTDG…ADELARAGMA (146 aa). Residues Asp-9, Glu-52, Asp-74, and Asp-138 each contribute to the Mg(2+) site.

The protein belongs to the RNase H family. Monomer. It depends on Mg(2+) as a cofactor.

The protein resides in the cytoplasm. The enzyme catalyses Endonucleolytic cleavage to 5'-phosphomonoester.. Its function is as follows. Endonuclease that specifically degrades the RNA of RNA-DNA hybrids. The sequence is that of Ribonuclease H from Cereibacter sphaeroides (strain ATCC 17025 / ATH 2.4.3) (Rhodobacter sphaeroides).